The sequence spans 354 residues: Soluble interferon alpha/beta receptor OPG204 (354 aa).

A signal peptide spans 1–22; it reads MMKMTMKMMVHIYFVSLLLLLF. Ig-like C2-type domains are found at residues 68-150 and 158-240; these read IGEP…RSHV and PEIY…IVVS. 2 cysteine pairs are disulfide-bonded: C76–C132 and C175–C224. N-linked (GlcNAc...) asparagine; by host glycans are attached at residues N120, N124, N185, N272, and N324. The 100-residue stretch at 249-348 folds into the Ig-like V-type domain; sequence PSQDHRFKLI…HNYYFEKTLT (100 aa). An intrachain disulfide couples C275 to C336.

Belongs to the interleukin-1 receptor family. Interacts with host IFNA1.

The protein resides in the secreted. Functionally, counteracts the antiviral effects of host IFN-alpha/beta and key IFN-inducible proteins involved in viral RNA degradation suxh as host OAS1. Acts as a soluble IFN-alpha receptor and thus inhibits the interaction between host IFN-alpha and its receptor. In Homo sapiens (Human), this protein is Soluble interferon alpha/beta receptor OPG204 (OPG204).